A 314-amino-acid chain; its full sequence is Acetaldehyde dehydrogenase 2 (314 aa).

Residue S15 to I18 coordinates NAD(+). C133 (acyl-thioester intermediate) is an active-site residue. NAD(+) is bound by residues S164 to N172 and N291.

This sequence belongs to the acetaldehyde dehydrogenase family.

It carries out the reaction acetaldehyde + NAD(+) + CoA = acetyl-CoA + NADH + H(+). This Pseudomonas putida (strain ATCC 700007 / DSM 6899 / JCM 31910 / BCRC 17059 / LMG 24140 / F1) protein is Acetaldehyde dehydrogenase 2.